Reading from the N-terminus, the 191-residue chain is Orotate phosphoribosyltransferase (191 aa).

5-phospho-alpha-D-ribose 1-diphosphate is bound at residue 114 to 122; that stretch reads EDVVTTGKS. Orotate contacts are provided by T118 and R146.

It belongs to the purine/pyrimidine phosphoribosyltransferase family. PyrE subfamily. In terms of assembly, homodimer. Mg(2+) serves as cofactor.

The catalysed reaction is orotidine 5'-phosphate + diphosphate = orotate + 5-phospho-alpha-D-ribose 1-diphosphate. It participates in pyrimidine metabolism; UMP biosynthesis via de novo pathway; UMP from orotate: step 1/2. In terms of biological role, catalyzes the transfer of a ribosyl phosphate group from 5-phosphoribose 1-diphosphate to orotate, leading to the formation of orotidine monophosphate (OMP). In Clostridium botulinum (strain Loch Maree / Type A3), this protein is Orotate phosphoribosyltransferase.